We begin with the raw amino-acid sequence, 366 residues long: tRNA/tmRNA (uracil-C(5))-methyltransferase (366 aa).

S-adenosyl-L-methionine-binding residues include Gln-190, Tyr-218, Asn-223, Glu-239, and Asp-299. The active-site Nucleophile is the Cys-324. Catalysis depends on Glu-358, which acts as the Proton acceptor.

Belongs to the class I-like SAM-binding methyltransferase superfamily. RNA M5U methyltransferase family. TrmA subfamily.

It carries out the reaction uridine(54) in tRNA + S-adenosyl-L-methionine = 5-methyluridine(54) in tRNA + S-adenosyl-L-homocysteine + H(+). It catalyses the reaction uridine(341) in tmRNA + S-adenosyl-L-methionine = 5-methyluridine(341) in tmRNA + S-adenosyl-L-homocysteine + H(+). Dual-specificity methyltransferase that catalyzes the formation of 5-methyluridine at position 54 (m5U54) in all tRNAs, and that of position 341 (m5U341) in tmRNA (transfer-mRNA). This Escherichia coli O17:K52:H18 (strain UMN026 / ExPEC) protein is tRNA/tmRNA (uracil-C(5))-methyltransferase.